Reading from the N-terminus, the 98-residue chain is Cuticle protein 67, isoform A (98 aa).

Tandem repeats lie at residues 7–10, 15–18, 22–25, 79–82, 86–89, and 92–95.

Its function is as follows. Component of the cuticle of migratory locust which contains more than 100 different structural proteins. This chain is Cuticle protein 67, isoform A, found in Locusta migratoria (Migratory locust).